Here is a 142-residue protein sequence, read N- to C-terminus: Ribonuclease VapC44 (142 aa).

The 123-residue stretch at 4-126 folds into the PINc domain; that stretch reads LLDVNVLLAL…GRFVTFDQSI (123 aa). Residues Asp-6 and Asp-105 each contribute to the Mg(2+) site.

It belongs to the PINc/VapC protein family. Mg(2+) serves as cofactor.

In terms of biological role, toxic component of a type II toxin-antitoxin (TA) system. An RNase. Its cognate antitoxin is VapB44. This Mycobacterium tuberculosis (strain CDC 1551 / Oshkosh) protein is Ribonuclease VapC44.